The chain runs to 319 residues: Lipoyl synthase (319 aa).

Positions 66, 71, 77, 92, 96, 99, and 305 each coordinate [4Fe-4S] cluster. The Radical SAM core domain occupies 78 to 294 (FNRGTATFMI…KKEALSIGFT (217 aa)).

The protein belongs to the radical SAM superfamily. Lipoyl synthase family. Requires [4Fe-4S] cluster as cofactor.

It localises to the cytoplasm. It carries out the reaction [[Fe-S] cluster scaffold protein carrying a second [4Fe-4S](2+) cluster] + N(6)-octanoyl-L-lysyl-[protein] + 2 oxidized [2Fe-2S]-[ferredoxin] + 2 S-adenosyl-L-methionine + 4 H(+) = [[Fe-S] cluster scaffold protein] + N(6)-[(R)-dihydrolipoyl]-L-lysyl-[protein] + 4 Fe(3+) + 2 hydrogen sulfide + 2 5'-deoxyadenosine + 2 L-methionine + 2 reduced [2Fe-2S]-[ferredoxin]. It functions in the pathway protein modification; protein lipoylation via endogenous pathway; protein N(6)-(lipoyl)lysine from octanoyl-[acyl-carrier-protein]: step 2/2. Functionally, catalyzes the radical-mediated insertion of two sulfur atoms into the C-6 and C-8 positions of the octanoyl moiety bound to the lipoyl domains of lipoate-dependent enzymes, thereby converting the octanoylated domains into lipoylated derivatives. This chain is Lipoyl synthase, found in Buchnera aphidicola subsp. Schizaphis graminum (strain Sg).